We begin with the raw amino-acid sequence, 125 residues long: Large ribosomal subunit protein bL12 (125 aa).

This sequence belongs to the bacterial ribosomal protein bL12 family. In terms of assembly, homodimer. Part of the ribosomal stalk of the 50S ribosomal subunit. Forms a multimeric L10(L12)X complex, where L10 forms an elongated spine to which 2 to 4 L12 dimers bind in a sequential fashion. Binds GTP-bound translation factors.

Forms part of the ribosomal stalk which helps the ribosome interact with GTP-bound translation factors. Is thus essential for accurate translation. This Rickettsia conorii (strain ATCC VR-613 / Malish 7) protein is Large ribosomal subunit protein bL12.